A 503-amino-acid chain; its full sequence is ATP synthase subunit alpha (503 aa).

170-177 (GDKQTGKT) contacts ATP.

This sequence belongs to the ATPase alpha/beta chains family. In terms of assembly, F-type ATPases have 2 components, CF(1) - the catalytic core - and CF(0) - the membrane proton channel. CF(1) has five subunits: alpha(3), beta(3), gamma(1), delta(1), epsilon(1). CF(0) has three main subunits: a(1), b(2) and c(9-12). The alpha and beta chains form an alternating ring which encloses part of the gamma chain. CF(1) is attached to CF(0) by a central stalk formed by the gamma and epsilon chains, while a peripheral stalk is formed by the delta and b chains.

It localises to the cell inner membrane. It catalyses the reaction ATP + H2O + 4 H(+)(in) = ADP + phosphate + 5 H(+)(out). Functionally, produces ATP from ADP in the presence of a proton gradient across the membrane. The alpha chain is a regulatory subunit. The protein is ATP synthase subunit alpha of Helicobacter pylori (strain J99 / ATCC 700824) (Campylobacter pylori J99).